The chain runs to 475 residues: Ribulose bisphosphate carboxylase large chain (475 aa).

A propeptide spanning residues methionine 1 to serine 2 is cleaved from the precursor. Position 3 is an N-acetylproline (proline 3). Lysine 14 is modified (N6,N6,N6-trimethyllysine). Asparagine 123 and threonine 173 together coordinate substrate. Lysine 175 serves as the catalytic Proton acceptor. Substrate is bound at residue lysine 177. The Mg(2+) site is built by lysine 201, aspartate 203, and glutamate 204. Position 201 is an N6-carboxylysine (lysine 201). Histidine 294 functions as the Proton acceptor in the catalytic mechanism. 3 residues coordinate substrate: arginine 295, histidine 327, and serine 379.

This sequence belongs to the RuBisCO large chain family. Type I subfamily. As to quaternary structure, heterohexadecamer of 8 large chains and 8 small chains; disulfide-linked. The disulfide link is formed within the large subunit homodimers. Mg(2+) is required as a cofactor. The disulfide bond which can form in the large chain dimeric partners within the hexadecamer appears to be associated with oxidative stress and protein turnover.

It localises to the plastid. The protein resides in the chloroplast. It catalyses the reaction 2 (2R)-3-phosphoglycerate + 2 H(+) = D-ribulose 1,5-bisphosphate + CO2 + H2O. The catalysed reaction is D-ribulose 1,5-bisphosphate + O2 = 2-phosphoglycolate + (2R)-3-phosphoglycerate + 2 H(+). Functionally, ruBisCO catalyzes two reactions: the carboxylation of D-ribulose 1,5-bisphosphate, the primary event in carbon dioxide fixation, as well as the oxidative fragmentation of the pentose substrate in the photorespiration process. Both reactions occur simultaneously and in competition at the same active site. The polypeptide is Ribulose bisphosphate carboxylase large chain (Citrus sinensis (Sweet orange)).